We begin with the raw amino-acid sequence, 115 residues long: Ribosome-binding factor A (115 aa).

Belongs to the RbfA family. As to quaternary structure, monomer. Binds 30S ribosomal subunits, but not 50S ribosomal subunits or 70S ribosomes.

It localises to the cytoplasm. Functionally, one of several proteins that assist in the late maturation steps of the functional core of the 30S ribosomal subunit. Associates with free 30S ribosomal subunits (but not with 30S subunits that are part of 70S ribosomes or polysomes). Required for efficient processing of 16S rRNA. May interact with the 5'-terminal helix region of 16S rRNA. The polypeptide is Ribosome-binding factor A (Streptococcus gordonii (strain Challis / ATCC 35105 / BCRC 15272 / CH1 / DL1 / V288)).